The following is a 915-amino-acid chain: Isoleucine--tRNA ligase (915 aa).

The short motif at 57 to 67 (PYANGNLHMGH) is the 'HIGH' region element. E554 is an L-isoleucyl-5'-AMP binding site. Residues 595 to 599 (KMSKS) carry the 'KMSKS' region motif. An ATP-binding site is contributed by K598. Residues C885, C888, C905, and C908 each coordinate Zn(2+).

It belongs to the class-I aminoacyl-tRNA synthetase family. IleS type 1 subfamily. Monomer. Zn(2+) is required as a cofactor.

It localises to the cytoplasm. It carries out the reaction tRNA(Ile) + L-isoleucine + ATP = L-isoleucyl-tRNA(Ile) + AMP + diphosphate. Functionally, catalyzes the attachment of isoleucine to tRNA(Ile). As IleRS can inadvertently accommodate and process structurally similar amino acids such as valine, to avoid such errors it has two additional distinct tRNA(Ile)-dependent editing activities. One activity is designated as 'pretransfer' editing and involves the hydrolysis of activated Val-AMP. The other activity is designated 'posttransfer' editing and involves deacylation of mischarged Val-tRNA(Ile). In Staphylococcus carnosus (strain TM300), this protein is Isoleucine--tRNA ligase.